A 256-amino-acid polypeptide reads, in one-letter code: Sugar fermentation stimulation protein homolog (256 aa).

This sequence belongs to the SfsA family.

In Prochlorococcus marinus (strain MIT 9211), this protein is Sugar fermentation stimulation protein homolog.